The primary structure comprises 307 residues: CRISPR-associated endonuclease Cas1 2 (307 aa).

Residues glutamate 142, histidine 206, and glutamate 221 each coordinate Mn(2+).

The protein belongs to the CRISPR-associated endonuclease Cas1 family. Homodimer, forms a heterotetramer with a Cas2 homodimer. Forms oligomers, probably binds nucleic acids as a homodimer. Requires Mg(2+) as cofactor. The cofactor is Mn(2+).

Functionally, CRISPR (clustered regularly interspaced short palindromic repeat), is an adaptive immune system that provides protection against mobile genetic elements (viruses, transposable elements and conjugative plasmids). CRISPR clusters contain spacers, sequences complementary to antecedent mobile elements, and target invading nucleic acids. CRISPR clusters are transcribed and processed into CRISPR RNA (crRNA). Acts as a dsDNA endonuclease. Involved in the integration of spacer DNA into the CRISPR cassette. Its function is as follows. In vitro catalyzes a concerted transesterification reaction on branched DNA, as would be expected during integration of protospacers into the CRISPR leader sequence; Cas2 is not required in vitro. This reaction requires a 3'-OH group at the branch point. Binds ss- and dsDNA and ss- and dsRNA with approximately equal affinity. May be able to anneal complementary DNA strands. The sequence is that of CRISPR-associated endonuclease Cas1 2 from Saccharolobus solfataricus (strain ATCC 35092 / DSM 1617 / JCM 11322 / P2) (Sulfolobus solfataricus).